The following is a 1151-amino-acid chain: Semaphorin-5B (1151 aa).

Over 1–1036 (MPCGFSPSPV…TDCAGFNLIH (1036 aa)) the chain is Extracellular. In terms of domain architecture, Sema spans 103–553 (HPTVAFEDLQ…LRDGVLRVPL (451 aa)). The N-linked (GlcNAc...) asparagine glycan is linked to Asn-153. 2 cysteine pairs are disulfide-bonded: Cys-172–Cys-182 and Cys-199–Cys-208. Residues Asn-236 and Asn-345 are each glycosylated (N-linked (GlcNAc...) asparagine). 2 disulfide bridges follow: Cys-322/Cys-425 and Cys-346/Cys-388. Asn-436 carries an N-linked (GlcNAc...) asparagine glycan. Residues 555–602 (RCAAYRSQGACLGARDPYCGWDGKQQRCSTLEDSSNMSLWTQNITACP) enclose the PSI domain. 2 TSP type-1 domains span residues 664–720 (NGAW…TPCP) and 722–771 (PIFW…EGCP). 6 disulfide bridges follow: Cys-676-Cys-713, Cys-680-Cys-719, Cys-691-Cys-703, Cys-734-Cys-765, Cys-738-Cys-770, and Cys-749-Cys-755. Thr-788 carries an O-linked (GalNAc...) threonine glycan. TSP type-1 domains are found at residues 853-908 (SGGW…QACP), 910-965 (RGAW…QACP), and 966-1010 (EGWS…RPCP). 6 disulfides stabilise this stretch: Cys-865–Cys-902, Cys-869–Cys-907, Cys-880–Cys-892, Cys-922–Cys-959, Cys-926–Cys-964, and Cys-937–Cys-949. The helical; Signal-anchor for type III membrane protein transmembrane segment at 1037–1057 (LVATGISCFLGSGLLTLAVYL) threads the bilayer. Topologically, residues 1058–1151 (SCQHCQRQSQ…SPGQRCFPNS (94 aa)) are cytoplasmic.

Belongs to the semaphorin family.

It is found in the membrane. Functionally, may act as a positive axonal guidance cue. The polypeptide is Semaphorin-5B (SEMA5B) (Homo sapiens (Human)).